Consider the following 118-residue polypeptide: Large ribosomal subunit protein bL20 (118 aa).

Belongs to the bacterial ribosomal protein bL20 family.

Functionally, binds directly to 23S ribosomal RNA and is necessary for the in vitro assembly process of the 50S ribosomal subunit. It is not involved in the protein synthesizing functions of that subunit. The sequence is that of Large ribosomal subunit protein bL20 from Caulobacter vibrioides (strain ATCC 19089 / CIP 103742 / CB 15) (Caulobacter crescentus).